Consider the following 306-residue polypeptide: tRNA pseudouridine synthase B (306 aa).

Aspartate 43 (nucleophile) is an active-site residue.

The protein belongs to the pseudouridine synthase TruB family. Type 1 subfamily.

It catalyses the reaction uridine(55) in tRNA = pseudouridine(55) in tRNA. Its function is as follows. Responsible for synthesis of pseudouridine from uracil-55 in the psi GC loop of transfer RNAs. In Heliobacterium modesticaldum (strain ATCC 51547 / Ice1), this protein is tRNA pseudouridine synthase B.